We begin with the raw amino-acid sequence, 80 residues long: Large ribosomal subunit protein bL31 (80 aa).

Zn(2+)-binding residues include Cys16, Cys18, Cys38, and Cys41.

This sequence belongs to the bacterial ribosomal protein bL31 family. Type A subfamily. As to quaternary structure, part of the 50S ribosomal subunit. Zn(2+) is required as a cofactor.

In terms of biological role, binds the 23S rRNA. The protein is Large ribosomal subunit protein bL31 of Mycobacterium bovis (strain ATCC BAA-935 / AF2122/97).